The following is a 122-amino-acid chain: UPF0102 protein XCV0816 (122 aa).

The protein belongs to the UPF0102 family.

In Xanthomonas euvesicatoria pv. vesicatoria (strain 85-10) (Xanthomonas campestris pv. vesicatoria), this protein is UPF0102 protein XCV0816.